Here is a 364-residue protein sequence, read N- to C-terminus: Methylthioribose-1-phosphate isomerase (364 aa).

Substrate contacts are provided by residues 53–55 (RGA), Arg90, and Gln203. Asp244 functions as the Proton donor in the catalytic mechanism. 254–255 (NK) is a substrate binding site.

This sequence belongs to the eIF-2B alpha/beta/delta subunits family. MtnA subfamily.

The enzyme catalyses 5-(methylsulfanyl)-alpha-D-ribose 1-phosphate = 5-(methylsulfanyl)-D-ribulose 1-phosphate. It functions in the pathway amino-acid biosynthesis; L-methionine biosynthesis via salvage pathway; L-methionine from S-methyl-5-thio-alpha-D-ribose 1-phosphate: step 1/6. Catalyzes the interconversion of methylthioribose-1-phosphate (MTR-1-P) into methylthioribulose-1-phosphate (MTRu-1-P). The sequence is that of Methylthioribose-1-phosphate isomerase from Sinorhizobium medicae (strain WSM419) (Ensifer medicae).